A 155-amino-acid chain; its full sequence is Small ribosomal subunit protein uS7 (155 aa).

Belongs to the universal ribosomal protein uS7 family. In terms of assembly, part of the 30S ribosomal subunit. Contacts proteins S9 and S11.

In terms of biological role, one of the primary rRNA binding proteins, it binds directly to 16S rRNA where it nucleates assembly of the head domain of the 30S subunit. Is located at the subunit interface close to the decoding center, probably blocks exit of the E-site tRNA. The protein is Small ribosomal subunit protein uS7 of Thermotoga maritima (strain ATCC 43589 / DSM 3109 / JCM 10099 / NBRC 100826 / MSB8).